A 761-amino-acid polypeptide reads, in one-letter code: Probable beta-galactosidase 2 (761 aa).

The first 23 residues, 1 to 23 (MGTIKNNFQLLWLILLIVVLVNG), serve as a signal peptide directing secretion. 2 N-linked (GlcNAc...) asparagine glycosylation sites follow: N39 and N110. The Proton donor role is filled by E195. The N-linked (GlcNAc...) asparagine glycan is linked to N206. The active-site Nucleophile is the E267. 11 N-linked (GlcNAc...) asparagine glycosylation sites follow: N385, N405, N438, N501, N552, N553, N577, N592, N642, N690, and N696.

Belongs to the glycosyl hydrolase 35 family.

The catalysed reaction is Hydrolysis of terminal non-reducing beta-D-galactose residues in beta-D-galactosides.. Functionally, cleaves beta-linked terminal galactosyl residues from gangliosides, glycoproteins, and glycosaminoglycans. This is Probable beta-galactosidase 2 (glb2) from Dictyostelium discoideum (Social amoeba).